Reading from the N-terminus, the 294-residue chain is Beta-lactamase (294 aa).

The signal sequence occupies residues 1 to 27; sequence MFKKRGRQTVLIAAVLAFFTASSPLLA. The Acyl-ester intermediate role is filled by serine 76. Glutamate 174 serves as the catalytic Proton acceptor. 240-242 contributes to the substrate binding site; it reads KTG.

It belongs to the class-A beta-lactamase family.

The catalysed reaction is a beta-lactam + H2O = a substituted beta-amino acid. The polypeptide is Beta-lactamase (Citrobacter koseri (Citrobacter diversus)).